The following is a 110-amino-acid chain: Large ribosomal subunit protein uL22 (110 aa).

It belongs to the universal ribosomal protein uL22 family. In terms of assembly, part of the 50S ribosomal subunit.

Functionally, this protein binds specifically to 23S rRNA; its binding is stimulated by other ribosomal proteins, e.g. L4, L17, and L20. It is important during the early stages of 50S assembly. It makes multiple contacts with different domains of the 23S rRNA in the assembled 50S subunit and ribosome. The globular domain of the protein is located near the polypeptide exit tunnel on the outside of the subunit, while an extended beta-hairpin is found that lines the wall of the exit tunnel in the center of the 70S ribosome. This chain is Large ribosomal subunit protein uL22, found in Paraburkholderia phytofirmans (strain DSM 17436 / LMG 22146 / PsJN) (Burkholderia phytofirmans).